The primary structure comprises 144 residues: Maximins 8/H7 (144 aa).

A signal peptide spans 1 to 18 (MKFKYIVAVSFLIASAYA). Residues 19-43 (RSEENDEQSLSQRDVLEEESLREIR) constitute a propeptide that is removed on maturation. Asn-70 carries the post-translational modification Asparagine amide. Positions 74–123 (TAEDHEVMKRLEAVMRDLDSLDYPEEASERETRGFNQEEIANLFTKKEKR) are excised as a propeptide. At Leu-143 the chain carries Leucine amide.

This sequence belongs to the bombinin family. As to expression, expressed by the skin glands.

Its subcellular location is the secreted. In terms of biological role, maximin-8 shows antimicrobial activity against bacteria and against the fungus C.albicans. It has little hemolytic activity. Functionally, maximin-H7 shows antimicrobial activity against bacteria and against the fungus C.albicans. Shows strong hemolytic activity. The polypeptide is Maximins 8/H7 (Bombina maxima (Giant fire-bellied toad)).